Reading from the N-terminus, the 324-residue chain is D-alanine--D-alanine ligase (324 aa).

In terms of domain architecture, ATP-grasp spans 121–321 (NQYLKAFGVR…IKDVMTDIIE (201 aa)). ATP is bound at residue 149–204 (MEKIGLPCFIKPSLGGSSFGVTKVKTKEQIQPAIVKAFEEAQEVLVEAFMEGTELT). Asp275, Glu288, and Asn290 together coordinate Mg(2+).

This sequence belongs to the D-alanine--D-alanine ligase family. Requires Mg(2+) as cofactor. It depends on Mn(2+) as a cofactor.

The protein resides in the cytoplasm. The catalysed reaction is 2 D-alanine + ATP = D-alanyl-D-alanine + ADP + phosphate + H(+). The protein operates within cell wall biogenesis; peptidoglycan biosynthesis. Cell wall formation. The sequence is that of D-alanine--D-alanine ligase from Bacteroides thetaiotaomicron (strain ATCC 29148 / DSM 2079 / JCM 5827 / CCUG 10774 / NCTC 10582 / VPI-5482 / E50).